Reading from the N-terminus, the 590-residue chain is Beta-fructofuranosidase, insoluble isoenzyme 4 (590 aa).

The first 28 residues, 1–28 (MVMAPIPQPWHQWPFLILFFLVLFSCES), serve as a signal peptide directing secretion. Substrate is bound by residues 71-74 (WIND) and Gln-90. Residue Asp-74 is part of the active site. An N-linked (GlcNAc...) asparagine glycan is attached at Asn-94. Substrate is bound by residues Trp-98 and 133 to 134 (WT). An N-linked (GlcNAc...) asparagine glycan is attached at Asn-167. Position 198 to 199 (198 to 199 (RD)) interacts with substrate. Asn-247 is a glycosylation site (N-linked (GlcNAc...) asparagine). Positions 253 and 287 each coordinate substrate. A glycan (N-linked (GlcNAc...) asparagine) is linked at Asn-345. A disulfide bridge connects residues Cys-445 and Cys-491. N-linked (GlcNAc...) asparagine glycosylation is present at Asn-565.

Belongs to the glycosyl hydrolase 32 family. Expressed in leaves. Expressed at moderate levels in roots and flowers, and weakly in seeds.

The protein localises to the secreted. The protein resides in the extracellular space. It is found in the apoplast. Its subcellular location is the cell wall. It carries out the reaction Hydrolysis of terminal non-reducing beta-D-fructofuranoside residues in beta-D-fructofuranosides.. May play a role in sucrose partitioning during seed development and in stress response. In Oryza sativa subsp. japonica (Rice), this protein is Beta-fructofuranosidase, insoluble isoenzyme 4 (CIN4).